The primary structure comprises 82 residues: Small ribosomal subunit protein bS20 (82 aa).

Basic residues predominate over residues 1-11 (MANHKSALKRI). Positions 1–20 (MANHKSALKRIRSNETKRLR) are disordered.

It belongs to the bacterial ribosomal protein bS20 family.

Functionally, binds directly to 16S ribosomal RNA. This Christiangramia forsetii (strain DSM 17595 / CGMCC 1.15422 / KT0803) (Gramella forsetii) protein is Small ribosomal subunit protein bS20.